An 822-amino-acid chain; its full sequence is Pentatricopeptide repeat-containing protein At2g41720 (822 aa).

A disordered region spans residues 1 to 28 (MATVTNFKLVTPPESSRADKPGATKASD). 19 PPR repeats span residues 106–136 (ARKN…MKIQ), 142–176 (RNDI…SCKP), 177–211 (DAET…AIAP), 212–246 (SRST…GVGP), 247–281 (DLVT…KVRP), 282–316 (DTTT…RAEC), 319–353 (DVVT…GLKP), 354–388 (NIVS…GIIP), 389–423 (DVVS…RRKP), 424–458 (NVVT…GIKP), 459–493 (NVVS…GINL), 494–528 (NTAA…KVKA), 529–563 (DSVT…SIPL), 564–598 (TKEV…GCEP), 599–633 (DVIA…GIEP), 634–668 (DSIA…EIPF), 669–699 (TGAV…MDPY), 704–738 (SIGL…GVGI), and 739–773 (NLKT…GIQP).

It belongs to the PPR family. P subfamily.

This chain is Pentatricopeptide repeat-containing protein At2g41720 (EMB2654), found in Arabidopsis thaliana (Mouse-ear cress).